Consider the following 77-residue polypeptide: Acyl carrier protein (77 aa).

The 76-residue stretch at 2–77 folds into the Carrier domain; the sequence is SSIDKRIKEI…DAIDYITDHT (76 aa). Residue S37 is modified to O-(pantetheine 4'-phosphoryl)serine.

The protein belongs to the acyl carrier protein (ACP) family. In terms of processing, 4'-phosphopantetheine is transferred from CoA to a specific serine of apo-ACP by AcpS. This modification is essential for activity because fatty acids are bound in thioester linkage to the sulfhydryl of the prosthetic group.

The protein resides in the cytoplasm. Its pathway is lipid metabolism; fatty acid biosynthesis. Its function is as follows. Carrier of the growing fatty acid chain in fatty acid biosynthesis. The polypeptide is Acyl carrier protein (Geotalea daltonii (strain DSM 22248 / JCM 15807 / FRC-32) (Geobacter daltonii)).